Here is a 203-residue protein sequence, read N- to C-terminus: Proteasome subunit beta 2 (203 aa).

A propeptide spans 1–10 (MNLQNKILKG) (removed in mature form; by autocatalysis). Thr-11 (nucleophile) is an active-site residue.

The protein belongs to the peptidase T1B family. As to quaternary structure, the 20S proteasome core is composed of 14 alpha and 14 beta subunits that assemble into four stacked heptameric rings, resulting in a barrel-shaped structure. The two inner rings, each composed of seven catalytic beta subunits, are sandwiched by two outer rings, each composed of seven alpha subunits. The catalytic chamber with the active sites is on the inside of the barrel. Has a gated structure, the ends of the cylinder being occluded by the N-termini of the alpha-subunits. Is capped at one or both ends by the proteasome regulatory ATPase, PAN.

Its subcellular location is the cytoplasm. The catalysed reaction is Cleavage of peptide bonds with very broad specificity.. Its activity is regulated as follows. The formation of the proteasomal ATPase PAN-20S proteasome complex, via the docking of the C-termini of PAN into the intersubunit pockets in the alpha-rings, triggers opening of the gate for substrate entry. Interconversion between the open-gate and close-gate conformations leads to a dynamic regulation of the 20S proteasome proteolysis activity. Component of the proteasome core, a large protease complex with broad specificity involved in protein degradation. This Sulfolobus acidocaldarius (strain ATCC 33909 / DSM 639 / JCM 8929 / NBRC 15157 / NCIMB 11770) protein is Proteasome subunit beta 2.